Here is a 325-residue protein sequence, read N- to C-terminus: MEKQAHKKFCWIIKNFSPQSERLYSVPVLIGDCKWRPIAYPIRDKYFSLCLQVVDFESLPCGWGRYVELRLTLRNQHNSLNLSIKADHCFDEKRTTWGIPIPERIPICKLQTELYQSEHVVKGDFKIIAEVDVFEAVGTLTESDISGKASELLTKKIRNDGNESGDLLKKTSPEKESNHVDVNGFQVLPSQVEYVRSIFERHPDIAVEFRAKNQHLRTSCMIFLLSLIETLCQSLEELSNEDLVEADIALTYVKDAGFKVDWLEKKLDQVKDKKEREQSGLARLHELEEYLLKLKQKCSNLDLLVEKENVELSATRTPMSFNDVV.

The region spanning 6–131 is the MATH domain; it reads HKKFCWIIKN…KGDFKIIAEV (126 aa). Residues 258-306 adopt a coiled-coil conformation; the sequence is FKVDWLEKKLDQVKDKKEREQSGLARLHELEEYLLKLKQKCSNLDLLVE.

The chain is MATH domain and coiled-coil domain-containing protein At3g58430 from Arabidopsis thaliana (Mouse-ear cress).